The following is a 119-amino-acid chain: Integration host factor subunit beta (119 aa).

Positions 91 to 119 (DLVGNDQGDDSSNGSSDPLQSVMDMHAMH) are disordered. Over residues 94–107 (GNDQGDDSSNGSSD) the composition is skewed to low complexity.

It belongs to the bacterial histone-like protein family. In terms of assembly, heterodimer of an alpha and a beta chain.

Its function is as follows. This protein is one of the two subunits of integration host factor, a specific DNA-binding protein that functions in genetic recombination as well as in transcriptional and translational control. This is Integration host factor subunit beta from Bordetella parapertussis (strain 12822 / ATCC BAA-587 / NCTC 13253).